A 340-amino-acid chain; its full sequence is CMP-N-acetylneuraminate-beta-galactosamide-alpha-2,3-sialyltransferase 1 (340 aa).

The Cytoplasmic portion of the chain corresponds to 1 to 13; that stretch reads MVTLRKRTLKVLT. A helical; Signal-anchor for type II membrane protein membrane pass occupies residues 14–34; it reads FLVLFIFLTSFFLNYSHTMVA. Residues 35–340 lie on the Lumenal side of the membrane; the sequence is TTWFPKQMVL…INKIRIFKGR (306 aa). 3 disulfide bridges follow: C59/C64, C61/C139, and C142/C281. N-linked (GlcNAc...) asparagine glycosylation occurs at N79. Substrate is bound at residue Q105. An N-linked (GlcNAc...) asparagine glycan is attached at N114. 2 residues coordinate substrate: N147 and N170. N-linked (GlcNAc...) asparagine glycosylation is present at N201. Substrate is bound by residues Y230, Y266, G270, G290, H299, and H316. The N-linked (GlcNAc...) asparagine glycan is linked to N323.

Belongs to the glycosyltransferase 29 family. The soluble form derives from the membrane form by proteolytic processing. In terms of tissue distribution, expressed in several tissues. Highest expression in lung, liver, skeletal muscle, kidney, pancreas, spleen and placenta.

It is found in the golgi apparatus. The protein localises to the golgi stack membrane. It localises to the trans-Golgi network membrane. The protein resides in the secreted. It catalyses the reaction a beta-D-galactosyl-(1-&gt;3)-N-acetyl-alpha-D-galactosaminyl derivative + CMP-N-acetyl-beta-neuraminate = an N-acetyl-alpha-neuraminyl-(2-&gt;3)-beta-D-galactosyl-(1-&gt;3)-N-acetyl-alpha-D-galactosaminyl derivative + CMP + H(+). The catalysed reaction is a ganglioside GM1 + CMP-N-acetyl-beta-neuraminate = a ganglioside GD1a + CMP + H(+). It carries out the reaction a ganglioside GM1 (d18:1(4E)) + CMP-N-acetyl-beta-neuraminate = a ganglioside GD1a (d18:1(4E)) + CMP + H(+). The enzyme catalyses ganglioside GM1 (d18:1(4E)/18:0) + CMP-N-acetyl-beta-neuraminate = ganglioside GD1a (18:1(4E)/18:0) + CMP + H(+). It catalyses the reaction a ganglioside GA1 + CMP-N-acetyl-beta-neuraminate = a ganglioside GM1b + CMP + H(+). The catalysed reaction is a ganglioside GA1 (d18:1(4E)) + CMP-N-acetyl-beta-neuraminate = a ganglioside GM1b (d18:1(4E)) + CMP + H(+). It carries out the reaction a ganglioside GD1b + CMP-N-acetyl-beta-neuraminate = a ganglioside GT1b + CMP + H(+). The enzyme catalyses a 3-O-[beta-D-galactosyl-(1-&gt;3)-N-acetyl-alpha-D-galactosaminyl]-L-threonyl-[protein] + CMP-N-acetyl-beta-neuraminate = a 3-O-[N-acetyl-alpha-neuraminyl-(2-&gt;3)-beta-D-galactosyl-(1-&gt;3)-N-acetyl-alpha-D-galactosaminyl]-L-threonyl-[protein] + CMP + H(+). It catalyses the reaction a 3-O-[beta-D-galactosyl-(1-&gt;3)-N-acetyl-alpha-D-galactosaminyl]-L-seryl-[protein] + CMP-N-acetyl-beta-neuraminate = 3-O-[N-acetyl-alpha-neuraminyl-(2-&gt;3)-beta-D-galactosyl-(1-&gt;3)-N-acetyl-alpha-D-galactosaminyl]-L-seryl-[protein] + CMP + H(+). It participates in protein modification; protein glycosylation. The protein operates within glycolipid biosynthesis. In terms of biological role, a beta-galactoside alpha2-&gt;3 sialyltransferase involved in terminal sialylation of glycoproteins and glycolipids. Catalyzes the transfer of sialic acid (N-acetyl-neuraminic acid; Neu5Ac) from the nucleotide sugar donor CMP-Neu5Ac onto acceptor Galbeta-(1-&gt;3)-GalNAc-terminated glycoconjugates through an alpha2-3 linkage. Adds sialic acid to the core 1 O-glycan, Galbeta-(1-&gt;3)-GalNAc-O-Ser/Thr, which is a major structure of mucin-type O-glycans. As part of a homeostatic mechanism that regulates CD8-positive T cell numbers, sialylates core 1 O-glycans of T cell glycoproteins, SPN/CD43 and PTPRC/CD45. Prevents premature apoptosis of thymic CD8-positive T cells prior to peripheral emigration, whereas in the secondary lymphoid organs controls the survival of CD8-positive memory T cells generated following a successful immune response. Transfers sialic acid to asialofetuin, presumably onto Galbeta-(1-&gt;3)-GalNAc-O-Ser. Sialylates GM1a, GA1 and GD1b gangliosides to form GD1a, GM1b and GT1b, respectively. This is CMP-N-acetylneuraminate-beta-galactosamide-alpha-2,3-sialyltransferase 1 from Homo sapiens (Human).